The primary structure comprises 101 residues: Large ribosomal subunit protein bL21 (101 aa).

Belongs to the bacterial ribosomal protein bL21 family. Part of the 50S ribosomal subunit. Contacts protein L20.

This protein binds to 23S rRNA in the presence of protein L20. The polypeptide is Large ribosomal subunit protein bL21 (Anaeromyxobacter dehalogenans (strain 2CP-1 / ATCC BAA-258)).